A 616-amino-acid polypeptide reads, in one-letter code: Zinc metalloproteinase-disintegrin-like ecarin (616 aa).

An N-terminal signal peptide occupies residues Met-1 to Ser-20. Positions Ile-21 to Ile-190 are excised as a propeptide. One can recognise a Peptidase M12B domain in the interval Lys-201–Pro-397. Glu-204 lines the Ca(2+) pocket. N-linked (GlcNAc...) asparagine glycans are attached at residues Asn-219 and Asn-261. Asp-288 is a Ca(2+) binding site. Asn-295 and Asn-326 each carry an N-linked (GlcNAc...) asparagine glycan. Intrachain disulfides connect Cys-312/Cys-392, Cys-352/Cys-376, and Cys-354/Cys-359. His-337 contributes to the Zn(2+) binding site. Residue Glu-338 is part of the active site. Positions 341 and 347 each coordinate Zn(2+). The Ca(2+) site is built by Cys-392, Val-407, Asn-410, Ile-412, Glu-414, Glu-417, and Asp-420. The Disintegrin domain maps to Pro-405–Asn-491. Intrachain disulfides connect Cys-408–Cys-437, Cys-419–Cys-432, Cys-421–Cys-427, Cys-431–Cys-454, Cys-445–Cys-451, Cys-450–Cys-476, Cys-463–Cys-483, Cys-470–Cys-502, Cys-495–Cys-507, Cys-514–Cys-567, Cys-529–Cys-578, Cys-542–Cys-555, Cys-562–Cys-604, and Cys-598–Cys-609. The short motif at Asp-469 to Asp-471 is the D/ECD-tripeptide element. Asp-471, Val-472, and Asn-486 together coordinate Ca(2+). N-linked (GlcNAc...) asparagine glycosylation is present at Asn-497.

The protein belongs to the venom metalloproteinase (M12B) family. P-III subfamily. P-IIIa sub-subfamily. As to quaternary structure, monomer. The cofactor is Zn(2+). As to expression, expressed by the venom gland.

It localises to the secreted. Its function is as follows. Snake venom zinc metalloproteinase that catalyzes the conversion of prothrombin (F2) to alpha-thrombin through formation of a thrombin intermediate, thereby functioning as a procoagulant protein. Has a low Km for prothrombin and a high kcat. Cleaves the 320-Arg-Ile-321 bond in prothrombin and produces meizothrombin which is ultimately converted to alpha-thrombin by autolysis. This is Zinc metalloproteinase-disintegrin-like ecarin from Echis carinatus (Saw-scaled viper).